Consider the following 282-residue polypeptide: E3 ubiquitin-protein ligase SIAH1 (282 aa).

A compositionally biased stretch (polar residues) spans 1 to 17 (MSRQTATALPTGTSKCP). Residues 1 to 22 (MSRQTATALPTGTSKCPPSQRV) form a disordered region. Ser-19 bears the Phosphoserine; by ATM and ATR mark. An RING-type zinc finger spans residues 41 to 76 (CPVCFDYVLPPILQCQSGHLVCSNCRPKLTCCPTCR). The tract at residues 90–282 (VANSVLFPCK…LGINVTISMC (193 aa)) is SBD. An SIAH-type zinc finger spans residues 93-153 (SVLFPCKYAS…VMPHLMHQHK (61 aa)). Positions 98, 105, 117, 121, 128, 135, 147, and 152 each coordinate Zn(2+).

The protein belongs to the SINA (Seven in absentia) family. As to quaternary structure, homodimer. Component of some large E3 complex composed of UBE2D1, SIAH1, CACYBP/SIP, SKP1, APC and TBL1X. Interacts with UBE2I. Interacts with alpha-tubulin. Interacts with PEG10, which may inhibit its activity. Interacts with PEG3 and HIPK2. Interacts with group 1 glutamate receptors GRM1 and GRM5. Interacts with DAB1, which may inhibit its activity. Interacts with UBE2E2. Interacts with SNCAIP. Interacts with HIPK2; the interaction is promoted by DAZAP2 and results in SIAH1-mediated ubiquitination and subsequent proteasomal degradation of HIPK2. Interacts with DAZAP2; the interaction is decreased following phosphorylation of DAZAP2 by HIPK2. Interacts with GAPDH; leading to stabilize SIAH1. Interacts with Bassoon/BSN and Piccolo/PLCO; these interactions negatively regulate SIAH1 E3 ligase activity. Interacts with DCC. Interacts with AXIN1; catalyzes AXIN1 ubiquitination and subsequent proteasome-mediated ubiquitin-dependent degradation. Phosphorylated on Ser-19 by ATM and ATR. This phosphorylation disrupts SIAH1 interaction with HIPK2, and subsequent proteasomal degradation of HIPK2.

The protein resides in the cytoplasm. The protein localises to the nucleus. It catalyses the reaction S-ubiquitinyl-[E2 ubiquitin-conjugating enzyme]-L-cysteine + [acceptor protein]-L-lysine = [E2 ubiquitin-conjugating enzyme]-L-cysteine + N(6)-ubiquitinyl-[acceptor protein]-L-lysine.. The protein operates within protein modification; protein ubiquitination. Functionally, E3 ubiquitin-protein ligase that mediates ubiquitination and subsequent proteasomal degradation of target proteins. E3 ubiquitin ligases accept ubiquitin from an E2 ubiquitin-conjugating enzyme in the form of a thioester and then directly transfers the ubiquitin to targeted substrates. Mediates E3 ubiquitin ligase activity either through direct binding to substrates or by functioning as the essential RING domain subunit of larger E3 complexes. Triggers the ubiquitin-mediated degradation of many substrates, including proteins involved in transcription regulation (ELL2, MYB, POU2AF1, PML and RBBP8), a cell surface receptor (DCC), cytoplasmic signal transduction molecules (KLF10/TIEG1 and NUMB), an antiapoptotic protein (BAG1), a microtubule motor protein (KIF22), a protein involved in synaptic vesicle function in neurons (SYP), a structural protein (CTNNB1) and SNCAIP. Confers constitutive instability to HIPK2 through proteasomal degradation. It is thereby involved in many cellular processes such as apoptosis, tumor suppression, cell cycle, axon guidance, transcription, spermatogenesis and TNF-alpha signaling. Has some overlapping function with SIAH2. Induces apoptosis in cooperation with PEG3. Upon nitric oxid (NO) generation that follows apoptotic stimulation, interacts with S-nitrosylated GAPDH, mediating the translocation of GAPDH to the nucleus. GAPDH acts as a stabilizer of SIAH1, facilitating the degradation of nuclear proteins. Mediates ubiquitination and degradation of EGLN2 and EGLN3 in response to the unfolded protein response (UPR), leading to their degradation and subsequent stabilization of ATF4. Also part of the Wnt signaling pathway in which it mediates the Wnt-induced ubiquitin-mediated proteasomal degradation of AXIN1. The polypeptide is E3 ubiquitin-protein ligase SIAH1 (Siah1) (Rattus norvegicus (Rat)).